The chain runs to 550 residues: Metal transporter Nramp3 (550 aa).

Residues 1–26 (MSGPMQRSSQPQFISSVERNNQSNGP) are compositionally biased toward polar residues. Residues 1–30 (MSGPMQRSSQPQFISSVERNNQSNGPGTPL) are disordered. A run of 12 helical transmembrane segments spans residues 50 to 70 (LFSYIGPGFLVSIAYIDPGNF), 83 to 103 (ELLWIILIASCAALIIQSLAA), 127 to 147 (FILWILAELAVVACDIPEVIG), 158 to 178 (IPVWCGVLITGLSTLMLLLLQ), 185 to 205 (LEFLIAILVSLIATCFLVELG), 233 to 253 (ISLLGAMVMPHNLFLHSALVL), 276 to 296 (AFALTIAFLINISIISVSGAV), 333 to 353 (LFAVALLASGQSSTITGTYAG), 368 to 390 (WIRNLLTRSLAILPSLIVSIIGG), 397 to 417 (LIIIASMILSFELPFALVPLL), 435 to 455 (ISVITWGIGSFIVVINTYFLI), and 473 to 493 (VFSGIFGFLGMLIYMAAILYL). Residues 523–550 (GEGSLGHLPREDISSMQLPQQRTASDLD) form a disordered region. Residues 536–550 (SSMQLPQQRTASDLD) are compositionally biased toward polar residues.

This sequence belongs to the NRAMP (TC 2.A.55) family.

It is found in the membrane. In terms of biological role, probable metal transporter. This Oryza sativa subsp. japonica (Rice) protein is Metal transporter Nramp3 (NRAMP3).